Consider the following 231-residue polypeptide: NADH-ubiquinone oxidoreductase chain 4 (231 aa).

6 consecutive transmembrane segments (helical) span residues 1–21 (PIAG…YGII), 34–54 (LFLP…LTCL), 63–85 (IAYS…TPWG), 89–111 (AMAL…NTTY), 128–148 (ILPM…AIPP), and 156–176 (LLIM…LGLS).

This sequence belongs to the complex I subunit 4 family.

It localises to the mitochondrion membrane. The catalysed reaction is a ubiquinone + NADH + 5 H(+)(in) = a ubiquinol + NAD(+) + 4 H(+)(out). Its function is as follows. Core subunit of the mitochondrial membrane respiratory chain NADH dehydrogenase (Complex I) that is believed to belong to the minimal assembly required for catalysis. Complex I functions in the transfer of electrons from NADH to the respiratory chain. The immediate electron acceptor for the enzyme is believed to be ubiquinone. The polypeptide is NADH-ubiquinone oxidoreductase chain 4 (MT-ND4) (Crotalus concolor (Midget faded rattlesnake)).